The sequence spans 236 residues: 2-C-methyl-D-erythritol 4-phosphate cytidylyltransferase (236 aa).

This sequence belongs to the IspD/TarI cytidylyltransferase family. IspD subfamily. In terms of assembly, homodimer.

The catalysed reaction is 2-C-methyl-D-erythritol 4-phosphate + CTP + H(+) = 4-CDP-2-C-methyl-D-erythritol + diphosphate. Its pathway is isoprenoid biosynthesis; isopentenyl diphosphate biosynthesis via DXP pathway; isopentenyl diphosphate from 1-deoxy-D-xylulose 5-phosphate: step 2/6. Catalyzes the formation of 4-diphosphocytidyl-2-C-methyl-D-erythritol from CTP and 2-C-methyl-D-erythritol 4-phosphate (MEP). The chain is 2-C-methyl-D-erythritol 4-phosphate cytidylyltransferase from Salmonella heidelberg (strain SL476).